The sequence spans 571 residues: Gag-Pro polyprotein (571 aa).

Glycine 2 is lipidated: N-myristoyl glycine; by host. The PPXY motif signature appears at 100–103 (PPPY). Repeats lie at residues 342-362 (PPPG…DCPT) and 367-387 (PPPG…DCPT). 2 consecutive CCHC-type zinc fingers follow at residues 345 to 362 (GPCY…DCPT) and 370 to 387 (GPCP…DCPT). The region spanning 447–525 (ALMLVDTGAE…DKWQILGRDV (79 aa)) is the Peptidase A2 domain. The Protease; shared with dimeric partner role is filled by aspartate 452.

Homodimer; the homodimers are part of the immature particles. Interacts with human TSG101 and NEDD4; these interactions are essential for budding and release of viral particles. As to quaternary structure, homodimer; further assembles as homohexamers. Post-translationally, specific enzymatic cleavages by the viral protease yield mature proteins. The polyprotein is cleaved during and after budding, this process is termed maturation. The protease is autoproteolytically processed at its N- and C-termini. In terms of processing, gag polyprotein: Myristoylated. Myristoylation of the matrix (MA) domain mediates the transport and binding of Gag polyproteins to the host plasma membrane and is required for the assembly of viral particles.

It is found in the virion. Functionally, the matrix domain targets Gag, Gag-Pro and Gag-Pro-Pol polyproteins to the plasma membrane via a multipartite membrane binding signal, that includes its myristoylated N-terminus. In terms of biological role, matrix protein. Forms the spherical core of the virus that encapsulates the genomic RNA-nucleocapsid complex. Its function is as follows. Binds strongly to viral nucleic acids and promote their aggregation. Also destabilizes the nucleic acids duplexes via highly structured zinc-binding motifs. Functionally, the aspartyl protease mediates proteolytic cleavages of Gag and Gag-Pol polyproteins during or shortly after the release of the virion from the plasma membrane. Cleavages take place as an ordered, step-wise cascade to yield mature proteins. This process is called maturation. Displays maximal activity during the budding process just prior to particle release from the cell. In Bos taurus (Bovine), this protein is Gag-Pro polyprotein.